Reading from the N-terminus, the 144-residue chain is 3-hydroxyacyl-[acyl-carrier-protein] dehydratase FabZ (144 aa).

His-51 is a catalytic residue.

The protein belongs to the thioester dehydratase family. FabZ subfamily.

The protein localises to the cytoplasm. The catalysed reaction is a (3R)-hydroxyacyl-[ACP] = a (2E)-enoyl-[ACP] + H2O. In terms of biological role, involved in unsaturated fatty acids biosynthesis. Catalyzes the dehydration of short chain beta-hydroxyacyl-ACPs and long chain saturated and unsaturated beta-hydroxyacyl-ACPs. The chain is 3-hydroxyacyl-[acyl-carrier-protein] dehydratase FabZ from Clostridium botulinum (strain ATCC 19397 / Type A).